The sequence spans 513 residues: 2-isopropylmalate synthase (513 aa).

Residues 5 to 268 enclose the Pyruvate carboxyltransferase domain; sequence LIIFDTTLRD…EVGIDTTQIV (264 aa). Asp-14, His-202, His-204, and Asn-239 together coordinate Mn(2+). The tract at residues 394-513 is regulatory domain; that stretch reads RLLSLEQQSA…SKNERVAAQG (120 aa).

Belongs to the alpha-IPM synthase/homocitrate synthase family. LeuA type 1 subfamily. As to quaternary structure, homodimer. Mn(2+) is required as a cofactor.

The protein localises to the cytoplasm. It carries out the reaction 3-methyl-2-oxobutanoate + acetyl-CoA + H2O = (2S)-2-isopropylmalate + CoA + H(+). The protein operates within amino-acid biosynthesis; L-leucine biosynthesis; L-leucine from 3-methyl-2-oxobutanoate: step 1/4. Its function is as follows. Catalyzes the condensation of the acetyl group of acetyl-CoA with 3-methyl-2-oxobutanoate (2-ketoisovalerate) to form 3-carboxy-3-hydroxy-4-methylpentanoate (2-isopropylmalate). The chain is 2-isopropylmalate synthase from Methylibium petroleiphilum (strain ATCC BAA-1232 / LMG 22953 / PM1).